A 277-amino-acid chain; its full sequence is Diaminopimelate epimerase (277 aa).

Substrate-binding residues include asparagine 15 and asparagine 74. Cysteine 83 functions as the Proton donor in the catalytic mechanism. Residues 84–85, asparagine 159, asparagine 194, and 212–213 contribute to the substrate site; these read GN and ER. Cysteine 221 acts as the Proton acceptor in catalysis. 222–223 provides a ligand contact to substrate; the sequence is GT.

Belongs to the diaminopimelate epimerase family. As to quaternary structure, homodimer.

The protein resides in the cytoplasm. The catalysed reaction is (2S,6S)-2,6-diaminopimelate = meso-2,6-diaminopimelate. The protein operates within amino-acid biosynthesis; L-lysine biosynthesis via DAP pathway; DL-2,6-diaminopimelate from LL-2,6-diaminopimelate: step 1/1. Catalyzes the stereoinversion of LL-2,6-diaminopimelate (L,L-DAP) to meso-diaminopimelate (meso-DAP), a precursor of L-lysine and an essential component of the bacterial peptidoglycan. This chain is Diaminopimelate epimerase, found in Corynebacterium glutamicum (strain R).